The primary structure comprises 449 residues: Protein phosphatase fem-2 (449 aa).

The tract at residues 28 to 34 (EEAFADE) is interaction with fem-1 and fem-3. The interaction with fem-3 stretch occupies residues 54 to 56 (IRF). Residues 160–424 (GIHVSGDQLK…DNVSVVIGFL (265 aa)) form the PPM-type phosphatase domain. Asp202, Gly203, Asp370, and Asp415 together coordinate Mg(2+).

Belongs to the PP2C family. In terms of assembly, component of a complex containing fem-1, fem-2 and fem-3. Interacts (via N-terminus) with fem-1 and fem-3. Component of the CBC(fem-1) E3 ubiquitin-protein ligase complex, at least composed of cul-2, elc-1, tra-1, fem-1, fem-2 and fem-3; mediates the ubiquitination and subsequent proteasomal degradation of tra-1. Interacts with tra-1. Interacts with sel-10. It depends on Mg(2+) as a cofactor. Mn(2+) is required as a cofactor.

It carries out the reaction O-phospho-L-seryl-[protein] + H2O = L-seryl-[protein] + phosphate. The enzyme catalyses O-phospho-L-threonyl-[protein] + H2O = L-threonyl-[protein] + phosphate. In terms of biological role, dephosphorylates auto-phosphorylated Ca(2+)/calmodulin-dependent protein kinase unc-43/CAMKII in vitro. Involved in the regulation of sex determination. Together with fem-3, required for male sexual development by promoting the proteasomal-mediated degradation of tra-1, a transcription repressor of male-specific genes. Promotes apoptosis. This is Protein phosphatase fem-2 from Caenorhabditis elegans.